Reading from the N-terminus, the 129-residue chain is Large ribosomal subunit protein bL17 (129 aa).

The protein belongs to the bacterial ribosomal protein bL17 family. In terms of assembly, part of the 50S ribosomal subunit. Contacts protein L32.

This chain is Large ribosomal subunit protein bL17, found in Desulfotalea psychrophila (strain LSv54 / DSM 12343).